Here is a 118-residue protein sequence, read N- to C-terminus: DNA-binding protein inhibitor ID-3 (118 aa).

Residues 32–84 (SHKGPGVDEPMGLLYDMNGCYSKLKELVPGIPQGSKLSQVEILQHVIDYIFDL) enclose the bHLH domain.

Homodimer. Heterodimer with other HLH proteins. Interacts (via HLH domain) with the bHLH protein hes4/hairy2 (via Orange domain). Interacts with stat3.

It localises to the nucleus. Its function is as follows. Transcriptional regulator (lacking a basic DNA binding domain) which negatively regulates the basic helix-loop-helix (bHLH) transcription factors by forming heterodimers and inhibiting their DNA binding and transcriptional activity. Influences cell fate decisions in the embryo by sequestering and blocking the activity of the bHLH transcription factors that control these decisions. Inhibits the binding of myogenic bHLH-containing complexes to E-box DNA, thereby preventing activation of muscle-specific target genes. Also inhibits the activity of neurogenic factor neurod1/neuroD. Plays a role in cell cycle progression and survival of neural crest progenitors; binding to either hes4-B/hairy2b or stat3 blocks the formation of transcription factor complexes and the repressor function of hes4-B/hairy2B, to allow neural crest progenitors to differentiate. May play a role in the regulation of the circadian rhythm. The chain is DNA-binding protein inhibitor ID-3 (id3) from Xenopus tropicalis (Western clawed frog).